The chain runs to 740 residues: Elongation factor 2 (740 aa).

The tr-type G domain occupies 18–263 (EQVRNIGIIA…MVVRWVPNPR (246 aa)). Residues 27–34 (AHVDHGKT), 93–97 (DTPGH), and 147–150 (NKVD) contribute to the GTP site. At histidine 606 the chain carries Diphthamide.

This sequence belongs to the TRAFAC class translation factor GTPase superfamily. Classic translation factor GTPase family. EF-G/EF-2 subfamily.

The protein resides in the cytoplasm. Its function is as follows. Catalyzes the GTP-dependent ribosomal translocation step during translation elongation. During this step, the ribosome changes from the pre-translocational (PRE) to the post-translocational (POST) state as the newly formed A-site-bound peptidyl-tRNA and P-site-bound deacylated tRNA move to the P and E sites, respectively. Catalyzes the coordinated movement of the two tRNA molecules, the mRNA and conformational changes in the ribosome. The polypeptide is Elongation factor 2 (Ignicoccus hospitalis (strain KIN4/I / DSM 18386 / JCM 14125)).